The following is a 233-amino-acid chain: MSQSNRELVVDFLSYKLSQKGYSWSQFSDVEENRTEAPEETEPERETPSAINGNPSWHLADSPAVNGATGHSSSLDAREVIPMAAVKQALREAGDEFELRYRRAFSDLTSQLHITPGTAYQSFEQVVNELFRDGVNWGRIVAFFSFGGALCVESVDKEMQVLVSRIASWMATYLNDHLEPWIQENGGWDTFVDLYGNNAAAESRKGQERFNRWFLTGMTVAGVVLLGSLFSRK.

Residues 4–24 (SNRELVVDFLSYKLSQKGYSW) carry the BH4 motif. Residues 27 to 73 (FSDVEENRTEAPEETEPERETPSAINGNPSWHLADSPAVNGATGHSS) are disordered. Ser-49 carries the phosphoserine; by PLK3 modification. Ser-62 is subject to Phosphoserine; by CDK1. Positions 86–100 (VKQALREAGDEFELR) match the BH3 motif. The BH1 motif lies at 129–148 (ELFRDGVNWGRIVAFFSFGG). Positions 180-195 (PWIQENGGWDTFVDLY) match the BH2 motif. A helical transmembrane segment spans residues 210–226 (FNRWFLTGMTVAGVVLL).

It belongs to the Bcl-2 family. In terms of assembly, homodimer. Interacts with BCL2L11. Interacts with BAD. Interacts with PGAM5. Interacts with HEBP2. Interacts with p53/TP53 and BBC3; interaction with BBC3 disrupts the interaction with p53/TP53. Interacts with ATP5F1A and ATP5F1B; the interactions mediate the association of isoform Bcl-X(L) with the mitochondrial membrane ATP synthase F(1)F(0) ATP synthase. Interacts with VDAC1. Interacts with BCL2L11 (via BH3). Interacts with RNF183. Interacts with GIMAP3/IAN4 and GIMAP5/IAN5. Interacts with GIMAP5 and HSPA8/HSC70; the interaction between HSPA8 and BCL2L1 is impaired in the absence of GIMAP5. Interacts with isoform 4 of CLU; this interaction releases and activates BAX and promotes cell death. Forms heterodimers with BAX, BAK or BCL2; heterodimerization with BAX does not seem to be required for anti-apoptotic activity. Interacts with isoform 1 of SIVA1; the interaction inhibits the anti-apoptotic activity. Interacts with IKZF3. Interacts with RTL10/BOP. Interacts with DNM1L and CLTA; DNM1L and BCL2L1 isoform BCL-X(L) may form a complex in synaptic vesicles that also contains clathrin and MFF. Interacts (via the loop between motifs BH4 and BH3) with NLRP1 (via LRR repeats), but not with NLRP2, NLRP3, NLRP4, PYCARD, nor MEFV. Interacts with BECN1. Post-translationally, proteolytically cleaved by caspases during apoptosis. The cleaved protein, lacking the BH4 motif, has pro-apoptotic activity. Phosphorylated on Ser-62 by CDK1. This phosphorylation is partial in normal mitotic cells, but complete in G2-arrested cells upon DNA-damage, thus promoting subsequent apoptosis probably by triggering caspases-mediated proteolysis. Phosphorylated by PLK3, leading to regulate the G2 checkpoint and progression to cytokinesis during mitosis. Phosphorylation at Ser-49 appears during the S phase and G2, disappears rapidly in early mitosis during prometaphase, metaphase and early anaphase, and re-appears during telophase and cytokinesis. In terms of processing, ubiquitinated by RNF183 during prolonged ER stress, leading to degradation by the proteosome. Expressed in most tissues. Bcl-X(beta) is specifically expressed in cerebellum, heart, and thymus. In the ovary, the predominant form is Bcl-X(L), with a small but detectable level of Bcl-X(S).

It is found in the mitochondrion inner membrane. The protein localises to the mitochondrion outer membrane. It localises to the mitochondrion matrix. The protein resides in the cytoplasmic vesicle. Its subcellular location is the secretory vesicle. It is found in the synaptic vesicle membrane. The protein localises to the cytoplasm. It localises to the cytosol. The protein resides in the cytoskeleton. Its subcellular location is the microtubule organizing center. It is found in the centrosome. The protein localises to the nucleus membrane. Potent inhibitor of cell death. Inhibits activation of caspases. Appears to regulate cell death by blocking the voltage-dependent anion channel (VDAC) by binding to it and preventing the release of the caspase activator, CYC1, from the mitochondrial membrane. Also acts as a regulator of G2 checkpoint and progression to cytokinesis during mitosis. In terms of biological role, isoform Bcl-X(L) also regulates presynaptic plasticity, including neurotransmitter release and recovery, number of axonal mitochondria as well as size and number of synaptic vesicle clusters. During synaptic stimulation, increases ATP availability from mitochondria through regulation of mitochondrial membrane ATP synthase F(1)F(0) activity and regulates endocytic vesicle retrieval in hippocampal neurons through association with DMN1L and stimulation of its GTPase activity in synaptic vesicles. May attenuate inflammation impairing NLRP1-inflammasome activation, hence CASP1 activation and IL1B release. Its function is as follows. Isoform Bcl-X(S) promotes apoptosis. This Rattus norvegicus (Rat) protein is Bcl-2-like protein 1 (Bcl2l1).